Consider the following 144-residue polypeptide: Large ribosomal subunit protein uL15 (144 aa).

The disordered stretch occupies residues 1–49; it reads MKLNTLSPAAGAKSAAKRVGRGIGSGLGKTAGRGHKGQKSRSGGGVRVG. Residues 21 to 31 are compositionally biased toward gly residues; that stretch reads RGIGSGLGKTA.

It belongs to the universal ribosomal protein uL15 family. As to quaternary structure, part of the 50S ribosomal subunit.

Functionally, binds to the 23S rRNA. This Shewanella loihica (strain ATCC BAA-1088 / PV-4) protein is Large ribosomal subunit protein uL15.